We begin with the raw amino-acid sequence, 486 residues long: Aspartyl/glutamyl-tRNA(Asn/Gln) amidotransferase subunit B (486 aa).

Belongs to the GatB/GatE family. GatB subfamily. Heterotrimer of A, B and C subunits.

The catalysed reaction is L-glutamyl-tRNA(Gln) + L-glutamine + ATP + H2O = L-glutaminyl-tRNA(Gln) + L-glutamate + ADP + phosphate + H(+). The enzyme catalyses L-aspartyl-tRNA(Asn) + L-glutamine + ATP + H2O = L-asparaginyl-tRNA(Asn) + L-glutamate + ADP + phosphate + 2 H(+). In terms of biological role, allows the formation of correctly charged Asn-tRNA(Asn) or Gln-tRNA(Gln) through the transamidation of misacylated Asp-tRNA(Asn) or Glu-tRNA(Gln) in organisms which lack either or both of asparaginyl-tRNA or glutaminyl-tRNA synthetases. The reaction takes place in the presence of glutamine and ATP through an activated phospho-Asp-tRNA(Asn) or phospho-Glu-tRNA(Gln). This Janthinobacterium sp. (strain Marseille) (Minibacterium massiliensis) protein is Aspartyl/glutamyl-tRNA(Asn/Gln) amidotransferase subunit B.